The following is a 203-amino-acid chain: Large ribosomal subunit protein uL18 (203 aa).

It belongs to the universal ribosomal protein uL18 family. As to quaternary structure, part of the 50S ribosomal subunit. Contacts the 5S and 23S rRNAs.

Functionally, this is one of the proteins that bind and probably mediate the attachment of the 5S RNA into the large ribosomal subunit, where it forms part of the central protuberance. The sequence is that of Large ribosomal subunit protein uL18 from Pyrococcus abyssi (strain GE5 / Orsay).